Here is a 297-residue protein sequence, read N- to C-terminus: Glutamyl-Q tRNA(Asp) synthetase (297 aa).

Residues 9–13 and Glu45 contribute to the L-glutamate site; that span reads RFAPS. The short motif at 12–22 is the 'HIGH' region element; sequence PSPTGPLHFGS. Zn(2+) is bound by residues Cys101, Cys103, and Cys118. L-glutamate is bound by residues Tyr170 and Arg188. The 'KMSKS' region motif lies at 226–230; sequence KLSKS. Lys229 lines the ATP pocket.

This sequence belongs to the class-I aminoacyl-tRNA synthetase family. GluQ subfamily. The cofactor is Zn(2+).

Its function is as follows. Catalyzes the tRNA-independent activation of glutamate in presence of ATP and the subsequent transfer of glutamate onto a tRNA(Asp). Glutamate is transferred on the 2-amino-5-(4,5-dihydroxy-2-cyclopenten-1-yl) moiety of the queuosine in the wobble position of the QUC anticodon. The sequence is that of Glutamyl-Q tRNA(Asp) synthetase from Xanthomonas campestris pv. campestris (strain 8004).